Consider the following 164-residue polypeptide: Peptide deformylase (164 aa).

Fe cation is bound by residues cysteine 87 and histidine 129. The active site involves glutamate 130. Histidine 133 contacts Fe cation.

The protein belongs to the polypeptide deformylase family. Fe(2+) serves as cofactor.

It carries out the reaction N-terminal N-formyl-L-methionyl-[peptide] + H2O = N-terminal L-methionyl-[peptide] + formate. Functionally, removes the formyl group from the N-terminal Met of newly synthesized proteins. Requires at least a dipeptide for an efficient rate of reaction. N-terminal L-methionine is a prerequisite for activity but the enzyme has broad specificity at other positions. The polypeptide is Peptide deformylase (Thermotoga petrophila (strain ATCC BAA-488 / DSM 13995 / JCM 10881 / RKU-1)).